The sequence spans 39 residues: Photosystem II reaction center protein L (39 aa).

Residues 18-38 (SLYLGLLLVFVTAVLFTSYFF) traverse the membrane as a helical segment.

This sequence belongs to the PsbL family. As to quaternary structure, PSII is composed of 1 copy each of membrane proteins PsbA, PsbB, PsbC, PsbD, PsbE, PsbF, PsbH, PsbI, PsbJ, PsbK, PsbL, PsbM, PsbT, PsbX, PsbY, Psb30/Ycf12, peripheral proteins PsbO, CyanoQ (PsbQ), PsbU, PsbV and a large number of cofactors. It forms dimeric complexes.

The protein localises to the cellular thylakoid membrane. Its function is as follows. One of the components of the core complex of photosystem II (PSII). PSII is a light-driven water:plastoquinone oxidoreductase that uses light energy to abstract electrons from H(2)O, generating O(2) and a proton gradient subsequently used for ATP formation. It consists of a core antenna complex that captures photons, and an electron transfer chain that converts photonic excitation into a charge separation. This subunit is found at the monomer-monomer interface and is required for correct PSII assembly and/or dimerization. The polypeptide is Photosystem II reaction center protein L (Prochlorococcus marinus (strain MIT 9313)).